Consider the following 130-residue polypeptide: Small ribosomal subunit protein uS8 (130 aa).

It belongs to the universal ribosomal protein uS8 family. In terms of assembly, part of the 30S ribosomal subunit.

Functionally, one of the primary rRNA binding proteins, it binds directly to 16S rRNA central domain where it helps coordinate assembly of the platform of the 30S subunit. The protein is Small ribosomal subunit protein uS8 of Methanococcus maripaludis (strain C6 / ATCC BAA-1332).